A 100-amino-acid chain; its full sequence is Suppressor of silencing 2b (100 aa).

Residues 22 to 27 (KRRRRR) carry the Nuclear localization signal motif.

Belongs to the cucumovirus/ilarvirus protein 2b family. Homotetramer. Interacts with host AGO1; this interaction blocks AGO1 cleavage activity to attenuate RNA silencing and thus counter host defense. Interacts with host JAZ.

The protein resides in the host nucleus. Multifunctional protein that plays two independent roles: viral suppressor of host RNAi (VSR) and viral inducer of host attractiveness to insect vectors (VIA). Acts as a suppressor of RNA-mediated gene silencing, also known as post-transcriptional gene silencing (PTGS), a mechanism of plant viral defense that limits the accumulation of viral RNAs. May directly interfere with mobile silencing signaling. Also inhibits signal transduction by the phytohormone jasmonate, making the infected plant more attractive to aphids, which are the second host to play a role as a dissemination vector. Acts by binding to and inhibiting JAZ degradation in the host. This is Suppressor of silencing 2b from Cucumis sativus (Cucumber).